The primary structure comprises 527 residues: Catalase (527 aa).

Residues 1 to 22 are compositionally biased toward basic and acidic residues; sequence MADSRDPASDQMKLWKEQRAAQ. Residues 1-34 form a disordered region; the sequence is MADSRDPASDQMKLWKEQRAAQKPDVLTTGGGNP. Residue alanine 2 is modified to N-acetylalanine. Serine 9 bears the Phosphoserine mark. The residue at position 13 (lysine 13) is an N6-succinyllysine. Active-site residues include histidine 75 and asparagine 148. Positions 194, 201, 203, and 213 each coordinate NADP(+). The residue at position 221 (lysine 221) is an N6-succinyllysine. Lysine 233 bears the N6-acetyllysine mark. Positions 237, 303, and 305 each coordinate NADP(+). Tyrosine 358 is a heme binding site. A phosphoserine mark is found at serine 422 and serine 434. Lysine 449 and lysine 480 each carry N6-acetyllysine; alternate. An N6-succinyllysine; alternate mark is found at lysine 449 and lysine 480. N6-acetyllysine is present on lysine 499. Residue threonine 511 is modified to Phosphothreonine. Serine 517 carries the post-translational modification Phosphoserine. A Microbody targeting signal; atypical motif is present at residues 524 to 527; it reads KANL.

It belongs to the catalase family. Homotetramer. Interacts (via microbody targeting signal) with PEX5, monomeric form interacts with PEX5, leading to its translocation into peroxisomes. Heme serves as cofactor. Requires NADP(+) as cofactor.

The protein resides in the peroxisome matrix. It catalyses the reaction 2 H2O2 = O2 + 2 H2O. Functionally, catalyzes the degradation of hydrogen peroxide (H(2)O(2)) generated by peroxisomal oxidases to water and oxygen, thereby protecting cells from the toxic effects of hydrogen peroxide. Promotes growth of cells including T-cells, B-cells, myeloid leukemia cells, melanoma cells, mastocytoma cells and normal and transformed fibroblast cells. In Canis lupus familiaris (Dog), this protein is Catalase (CAT).